The primary structure comprises 293 residues: Phosphatidylserine decarboxylase proenzyme (293 aa).

Residues Asp90, His147, and Ser254 each act as charge relay system; for autoendoproteolytic cleavage activity in the active site. Catalysis depends on Ser254, which acts as the Schiff-base intermediate with substrate; via pyruvic acid; for decarboxylase activity. Ser254 carries the pyruvic acid (Ser); by autocatalysis modification.

It belongs to the phosphatidylserine decarboxylase family. PSD-B subfamily. Prokaryotic type I sub-subfamily. As to quaternary structure, heterodimer of a large membrane-associated beta subunit and a small pyruvoyl-containing alpha subunit. Requires pyruvate as cofactor. Post-translationally, is synthesized initially as an inactive proenzyme. Formation of the active enzyme involves a self-maturation process in which the active site pyruvoyl group is generated from an internal serine residue via an autocatalytic post-translational modification. Two non-identical subunits are generated from the proenzyme in this reaction, and the pyruvate is formed at the N-terminus of the alpha chain, which is derived from the carboxyl end of the proenzyme. The autoendoproteolytic cleavage occurs by a canonical serine protease mechanism, in which the side chain hydroxyl group of the serine supplies its oxygen atom to form the C-terminus of the beta chain, while the remainder of the serine residue undergoes an oxidative deamination to produce ammonia and the pyruvoyl prosthetic group on the alpha chain. During this reaction, the Ser that is part of the protease active site of the proenzyme becomes the pyruvoyl prosthetic group, which constitutes an essential element of the active site of the mature decarboxylase.

Its subcellular location is the cell membrane. The enzyme catalyses a 1,2-diacyl-sn-glycero-3-phospho-L-serine + H(+) = a 1,2-diacyl-sn-glycero-3-phosphoethanolamine + CO2. Its pathway is phospholipid metabolism; phosphatidylethanolamine biosynthesis; phosphatidylethanolamine from CDP-diacylglycerol: step 2/2. In terms of biological role, catalyzes the formation of phosphatidylethanolamine (PtdEtn) from phosphatidylserine (PtdSer). The sequence is that of Phosphatidylserine decarboxylase proenzyme from Yersinia pseudotuberculosis serotype O:1b (strain IP 31758).